Consider the following 284-residue polypeptide: tRNA pseudouridine synthase A (284 aa).

Asp62 acts as the Nucleophile in catalysis. Substrate is bound at residue Tyr120.

It belongs to the tRNA pseudouridine synthase TruA family. As to quaternary structure, homodimer.

The enzyme catalyses uridine(38/39/40) in tRNA = pseudouridine(38/39/40) in tRNA. Functionally, formation of pseudouridine at positions 38, 39 and 40 in the anticodon stem and loop of transfer RNAs. The polypeptide is tRNA pseudouridine synthase A (Thermosynechococcus vestitus (strain NIES-2133 / IAM M-273 / BP-1)).